The primary structure comprises 133 residues: Large ribosomal subunit protein bL20 (133 aa).

This sequence belongs to the bacterial ribosomal protein bL20 family.

Binds directly to 23S ribosomal RNA and is necessary for the in vitro assembly process of the 50S ribosomal subunit. It is not involved in the protein synthesizing functions of that subunit. This is Large ribosomal subunit protein bL20 from Chelativorans sp. (strain BNC1).